The following is a 327-amino-acid chain: MKGKFLKVSSLFVATLTTATLVSSPAANALSSKAMDNHPQQSQSSKQQTPKIQKGGNLKPLEQREHANVILPNNDRHQITDTTNGHYAPVTYIQVEAPTGTFIASGVVVGKDTLLTNKHVVDATHGDPHALKAFPSAINQDNYPNGGFTAEQITKYSGEGDLAIVKFSPNEQNKHIGEVVKPATMSNNAETQVNQNITVTGYPGDKPVATMWESKGKITYLKGEAMQYDLSTTGGNSGSPVFNEKNEVIGIHWGGVPNEFNGAVFINENVRNFLKQNIEDIHFANDDQPNNPDNPDNPNNPDNPNNPNNPDNPDNGDNNNSDNPDAA.

The first 29 residues, 1–29 (MKGKFLKVSSLFVATLTTATLVSSPAANA), serve as a signal peptide directing secretion. A propeptide spanning residues 30–68 (LSSKAMDNHPQQSQSSKQQTPKIQKGGNLKPLEQREHAN) is cleaved from the precursor. A disordered region spans residues 33–61 (KAMDNHPQQSQSSKQQTPKIQKGGNLKPL). Low complexity predominate over residues 40–54 (QQSQSSKQQTPKIQK). Catalysis depends on charge relay system residues His119, Asp161, and Ser237. Positions 283–327 (FANDDQPNNPDNPDNPNNPDNPNNPNNPDNPDNGDNNNSDNPDAA) are disordered. Positions 286–327 (DDQPNNPDNPDNPNNPDNPNNPNNPDNPDNGDNNNSDNPDAA) are enriched in low complexity. 9 repeat units span residues 289–291 (PNN), 292–294 (PDN), 295–297 (PDN), 298–300 (PNN), 301–303 (PDN), 304–306 (PNN), 307–309 (PNN), 310–312 (PDN), and 313–315 (PDN). The segment at 289 to 315 (PNNPDNPDNPNNPDNPNNPNNPDNPDN) is 9 X 3 AA repeats of P-[DN]-N.

It belongs to the peptidase S1B family. Post-translationally, proteolytically cleaved by aureolysin (aur). This cleavage leads to the activation of SspA.

Its subcellular location is the secreted. The enzyme catalyses Preferential cleavage: Glu-|-Xaa, Asp-|-Xaa.. In terms of biological role, preferentially cleaves peptide bonds on the carboxyl-terminal side of aspartate and glutamate. Along with other extracellular proteases it is involved in colonization and infection of human tissues. Required for proteolytic maturation of thiol protease SspB and inactivation of SspC, an inhibitor of SspB. It is the most important protease for degradation of fibronectin-binding protein (FnBP) and surface protein A, which are involved in adherence to host cells. May also protect bacteria against host defense mechanism by cleaving the immunoglobulin classes IgG, IgA and IgM. May be involved in the stability of secreted lipases. This Staphylococcus aureus (strain MW2) protein is Glutamyl endopeptidase (sspA).